A 282-amino-acid chain; its full sequence is uncharacterized protein (282 aa).

Disordered regions lie at residues 1–45 (MPLE…EEDE) and 201–259 (DRRR…KPWG). A compositionally biased stretch (basic and acidic residues) spans 10–19 (SEMKEFKEST). Polar residues predominate over residues 26 to 38 (SVSSEETLTQSMV). Residues 201 to 237 (DRRRKEDSKARSRLTRREEHSEHHRSGKSRRERERRS) are compositionally biased toward basic and acidic residues.

This is an uncharacterized protein from Ostreid herpesvirus 1 (isolate France) (OsHV-1).